Here is a 344-residue protein sequence, read N- to C-terminus: 4'-phosphopantetheinyl transferase NpgA (344 aa).

Belongs to the P-Pant transferase superfamily.

The catalysed reaction is apo-[ACP] + CoA = holo-[ACP] + adenosine 3',5'-bisphosphate + H(+). In terms of biological role, transfers the 4'-phosphopantetheine moiety from coenzyme A to a Ser of an acyl-carrier-protein. The enzyme is able to transfer the cofactor to a broad range of enzymes with acyl- or peptidyl-carrier protein domains. Required for primary biological processes such as growth and asexual/sexual development, and activates target enzymes involved in the synthesis of metabolites such as fatty acids, polyketides and nonribosomal peptides, lysine, siderophore, penicillin, sterigmatocystin, shamixantone, dehydroaustinol, and pigments. This is 4'-phosphopantetheinyl transferase NpgA (npgA) from Emericella nidulans (strain FGSC A4 / ATCC 38163 / CBS 112.46 / NRRL 194 / M139) (Aspergillus nidulans).